We begin with the raw amino-acid sequence, 475 residues long: Ribulose bisphosphate carboxylase large chain (475 aa).

Residues 1–2 (MA) constitute a propeptide that is removed on maturation. At P3 the chain carries N-acetylproline. K14 carries the N6,N6,N6-trimethyllysine modification. Positions 123 and 173 each coordinate substrate. K175 (proton acceptor) is an active-site residue. Position 177 (K177) interacts with substrate. Mg(2+)-binding residues include K201, D203, and E204. N6-carboxylysine is present on K201. Catalysis depends on H294, which acts as the Proton acceptor. Substrate is bound by residues R295, H327, and S379.

Belongs to the RuBisCO large chain family. Type I subfamily. As to quaternary structure, heterohexadecamer of 8 large chains and 8 small chains. Requires Mg(2+) as cofactor.

It localises to the plastid. The protein localises to the chloroplast. The enzyme catalyses 2 (2R)-3-phosphoglycerate + 2 H(+) = D-ribulose 1,5-bisphosphate + CO2 + H2O. It carries out the reaction D-ribulose 1,5-bisphosphate + O2 = 2-phosphoglycolate + (2R)-3-phosphoglycerate + 2 H(+). RuBisCO catalyzes two reactions: the carboxylation of D-ribulose 1,5-bisphosphate, the primary event in carbon dioxide fixation, as well as the oxidative fragmentation of the pentose substrate in the photorespiration process. Both reactions occur simultaneously and in competition at the same active site. This is Ribulose bisphosphate carboxylase large chain from Nephroselmis olivacea (Green alga).